A 229-amino-acid polypeptide reads, in one-letter code: Orotidine 5'-phosphate decarboxylase (229 aa).

Substrate is bound by residues D10, K32, 59-68 (DLKFHDIPNT), T119, R180, Q189, G209, and R210. K61 functions as the Proton donor in the catalytic mechanism.

It belongs to the OMP decarboxylase family. Type 1 subfamily. Homodimer.

It carries out the reaction orotidine 5'-phosphate + H(+) = UMP + CO2. Its pathway is pyrimidine metabolism; UMP biosynthesis via de novo pathway; UMP from orotate: step 2/2. Its function is as follows. Catalyzes the decarboxylation of orotidine 5'-monophosphate (OMP) to uridine 5'-monophosphate (UMP). The polypeptide is Orotidine 5'-phosphate decarboxylase (Legionella pneumophila (strain Lens)).